A 365-amino-acid chain; its full sequence is Protein RecA (365 aa).

Glycine 73–threonine 80 lines the ATP pocket.

This sequence belongs to the RecA family.

It localises to the cytoplasm. Can catalyze the hydrolysis of ATP in the presence of single-stranded DNA, the ATP-dependent uptake of single-stranded DNA by duplex DNA, and the ATP-dependent hybridization of homologous single-stranded DNAs. It interacts with LexA causing its activation and leading to its autocatalytic cleavage. The protein is Protein RecA of Prochlorococcus marinus (strain AS9601).